The following is a 187-amino-acid chain: Rusticyanin (187 aa).

The signal sequence occupies residues 1–32 (MYTQNTMKKNWYVTVGAAAALAATVGMGTAMA). Residues 85–187 (SFEVHDKKNP…TGMFGKIVVK (103 aa)) enclose the Plastocyanin-like domain. His117, Cys170, His175, and Met180 together coordinate Cu cation.

Monomer. Cu cation serves as cofactor.

It localises to the periplasm. Electron carrier from cytochrome c552 to the A-type oxidase. The polypeptide is Rusticyanin (rus) (Acidithiobacillus ferrooxidans (strain ATCC 23270 / DSM 14882 / CIP 104768 / NCIMB 8455) (Ferrobacillus ferrooxidans (strain ATCC 23270))).